The chain runs to 1175 residues: Tyrosine-protein phosphatase non-receptor type 21 (1175 aa).

An FERM domain is found at 23-308; the sequence is LVARIQLLNN…ARHKFYRLNQ (286 aa). The segment covering 395-421 has biased composition (polar residues); the sequence is YSAHSTNSLNTPQPYLQPSPMSSNPSI. A disordered region spans residues 395-445; that stretch reads YSAHSTNSLNTPQPYLQPSPMSSNPSIPGSDVMRPDYIPSHRHSALIPPSY. Ser577, Ser589, Ser590, Ser637, Ser673, Ser710, Ser711, Ser798, Ser800, and Ser805 each carry phosphoserine. The tract at residues 663–702 is disordered; it reads DVAPRTFSAGSQSSVFSDKVKQEGTEEQGSGGYSHKKSLS. The Tyrosine-protein phosphatase domain occupies 897–1168; it reads VFTEYERILK…TFVYRVLIQF (272 aa). Residues Glu1068, 1109–1115, and Gln1153 each bind substrate; that span reads CSAGVGR. Catalysis depends on Cys1109, which acts as the Phosphocysteine intermediate.

This sequence belongs to the protein-tyrosine phosphatase family. Non-receptor class subfamily. In terms of tissue distribution, particularly abundantly in adrenal glands.

Its subcellular location is the cytoplasm. The protein localises to the cytoskeleton. The catalysed reaction is O-phospho-L-tyrosyl-[protein] + H2O = L-tyrosyl-[protein] + phosphate. This chain is Tyrosine-protein phosphatase non-receptor type 21 (Ptpn21), found in Rattus norvegicus (Rat).